We begin with the raw amino-acid sequence, 315 residues long: tRNA dimethylallyltransferase (315 aa).

13–20 is a binding site for ATP; that stretch reads GPTASGKT. 15–20 lines the substrate pocket; sequence TASGKT. Interaction with substrate tRNA stretches follow at residues 38-41, 162-166, 243-248, and 276-283; these read DSAL, QRLSR, RCVGYR, and KRQITWLR.

Belongs to the IPP transferase family. Monomer. The cofactor is Mg(2+).

The catalysed reaction is adenosine(37) in tRNA + dimethylallyl diphosphate = N(6)-dimethylallyladenosine(37) in tRNA + diphosphate. Functionally, catalyzes the transfer of a dimethylallyl group onto the adenine at position 37 in tRNAs that read codons beginning with uridine, leading to the formation of N6-(dimethylallyl)adenosine (i(6)A). The chain is tRNA dimethylallyltransferase from Vibrio vulnificus (strain CMCP6).